Here is a 38-residue protein sequence, read N- to C-terminus: Kunitz-type trypsin inhibitor beta chain (38 aa).

This sequence belongs to the protease inhibitor I3 (leguminous Kunitz-type inhibitor) family. In terms of assembly, heterodimer of an alpha and a beta chain linked by a disulfide bond.

Its function is as follows. Inhibition of trypsin. This is Kunitz-type trypsin inhibitor beta chain from Neltuma juliflora (Mesquite).